The primary structure comprises 107 residues: Integration host factor subunit beta (107 aa).

The segment covering 82 to 101 (PGKELRERVDRRAGEPLKAE) has biased composition (basic and acidic residues). The interval 82–107 (PGKELRERVDRRAGEPLKAEDPDDDL) is disordered.

It belongs to the bacterial histone-like protein family. In terms of assembly, heterodimer of an alpha and a beta chain.

In terms of biological role, this protein is one of the two subunits of integration host factor, a specific DNA-binding protein that functions in genetic recombination as well as in transcriptional and translational control. The protein is Integration host factor subunit beta of Paraburkholderia xenovorans (strain LB400).